The following is a 100-amino-acid chain: Urease subunit gamma (100 aa).

The protein belongs to the urease gamma subunit family. In terms of assembly, heterotrimer of UreA (gamma), UreB (beta) and UreC (alpha) subunits. Three heterotrimers associate to form the active enzyme.

The protein resides in the cytoplasm. It catalyses the reaction urea + 2 H2O + H(+) = hydrogencarbonate + 2 NH4(+). Its pathway is nitrogen metabolism; urea degradation; CO(2) and NH(3) from urea (urease route): step 1/1. In Paraburkholderia phymatum (strain DSM 17167 / CIP 108236 / LMG 21445 / STM815) (Burkholderia phymatum), this protein is Urease subunit gamma.